A 252-amino-acid chain; its full sequence is uncharacterized protein (252 aa).

Helical transmembrane passes span 5-25, 29-49, 61-81, 141-161, 179-199, and 217-237; these read LTSLITQSLTFSILIVGIVSF, LALVGLLLPGIVFMATLGTFI, IAGIIGCLLGDWCSYFIGLYF, ILPSLLGCILWPPIYFFPGII, WLLLIIAILIWFGIWLTSKWW, and IGWIALIILSSGIIGLILIQF.

The protein belongs to the DedA family.

It localises to the cell membrane. This is an uncharacterized protein from Buchnera aphidicola subsp. Schizaphis graminum (strain Sg).